The primary structure comprises 192 residues: Pyridoxal 5'-phosphate synthase subunit PdxT (192 aa).

An L-glutamine-binding site is contributed by 47–49; the sequence is GES. The Nucleophile role is filled by cysteine 78. L-glutamine-binding positions include arginine 105 and 139-140; that span reads IR. Catalysis depends on charge relay system residues histidine 175 and glutamate 177.

The protein belongs to the glutaminase PdxT/SNO family. As to quaternary structure, in the presence of PdxS, forms a dodecamer of heterodimers. Only shows activity in the heterodimer.

The enzyme catalyses aldehydo-D-ribose 5-phosphate + D-glyceraldehyde 3-phosphate + L-glutamine = pyridoxal 5'-phosphate + L-glutamate + phosphate + 3 H2O + H(+). It catalyses the reaction L-glutamine + H2O = L-glutamate + NH4(+). Its pathway is cofactor biosynthesis; pyridoxal 5'-phosphate biosynthesis. Catalyzes the hydrolysis of glutamine to glutamate and ammonia as part of the biosynthesis of pyridoxal 5'-phosphate. The resulting ammonia molecule is channeled to the active site of PdxS. The chain is Pyridoxal 5'-phosphate synthase subunit PdxT from Solibacter usitatus (strain Ellin6076).